Here is a 150-residue protein sequence, read N- to C-terminus: uncharacterized protein (150 aa).

The first 23 residues, 1-23, serve as a signal peptide directing secretion; the sequence is MYSILIACLVLLLCLIIYVGHRA.

The protein belongs to the asfivirus EP152R family.

The protein localises to the virion. This is an uncharacterized protein from African swine fever virus (isolate Tick/South Africa/Pretoriuskop Pr4/1996) (ASFV).